We begin with the raw amino-acid sequence, 147 residues long: Secreted RxLR effector protein BLN04 (147 aa).

A signal peptide spans 1 to 23 (MATMRRICFLFVFNLAVATSTQG). Residues 58-61 (SEER) carry the dEER motif. Residues 117 to 137 (VYIYTILFLSIPIILGVAMYI) form a helical membrane-spanning segment.

It belongs to the RxLR effector family. In terms of assembly, interacts with host transcription factor NAC069.

The protein localises to the secreted. It localises to the host membrane. Its function is as follows. Secreted effector that inhibits stress-induced relocalization of the transcription factor NAC069 to the nucleus, thus affecting its broad role in abiotic and biotic stress responses. The polypeptide is Secreted RxLR effector protein BLN04 (Bremia lactucae (Lettuce downy mildew)).